The following is a 420-amino-acid chain: UDP-glucuronic acid decarboxylase 1 (420 aa).

Methionine 1 bears the N-acetylmethionine mark. The Cytoplasmic segment spans residues 1-19 (MVSKGLLRLVSSVNRRKMK). The helical; Signal-anchor for type II membrane protein transmembrane segment at 20–40 (LLLGIALFAYAASVWGNFVNM) threads the bilayer. Over 41 to 420 (RSIQENGELK…RVKKGRTRHS (380 aa)) the chain is Lumenal. Threonine 94 carries the post-translational modification Phosphothreonine. NAD(+) is bound by residues glycine 98, phenylalanine 99, valine 100, aspartate 119, asparagine 120, phenylalanine 122, threonine 123, glycine 124, aspartate 144, and valine 145. The UDP-alpha-D-glucuronate site is built by leucine 149 and tyrosine 150. Residues leucine 159 and serine 161 each contribute to the NAD(+) site. UDP-alpha-D-glucuronate is bound at residue lysine 177. An NAD(+)-binding site is contributed by threonine 178. UDP-alpha-D-glucuronate is bound by residues asparagine 185, glycine 188, lysine 191, and arginine 192. Positions 200, 231, and 235 each coordinate NAD(+). The active-site Proton acceptor is the tyrosine 231. UDP-alpha-D-glucuronate is bound by residues tyrosine 245, glutamine 248, and glutamate 249. Positions 261, 267, and 272 each coordinate NAD(+). N-linked (GlcNAc...) asparagine glycosylation is present at asparagine 316.

This sequence belongs to the NAD(P)-dependent epimerase/dehydratase family. UDP-glucuronic acid decarboxylase subfamily. As to quaternary structure, homodimer and homotetramer. Interacts with AKT1. The cofactor is NAD(+). As to expression, ubiquitous. Detected in heart, brain, spleen, lung, testis, liver, skeletal muscle and kidney.

It localises to the golgi apparatus. The protein localises to the golgi stack membrane. The catalysed reaction is UDP-alpha-D-glucuronate + H(+) = UDP-alpha-D-xylose + CO2. The protein operates within nucleotide-sugar biosynthesis; UDP-alpha-D-xylose biosynthesis; UDP-alpha-D-xylose from UDP-alpha-D-glucuronate: step 1/1. Functionally, catalyzes the NAD-dependent decarboxylation of UDP-glucuronic acid to UDP-xylose. Necessary for the biosynthesis of the core tetrasaccharide in glycosaminoglycan biosynthesis. The sequence is that of UDP-glucuronic acid decarboxylase 1 from Rattus norvegicus (Rat).